We begin with the raw amino-acid sequence, 95 residues long: Aspartyl/glutamyl-tRNA(Asn/Gln) amidotransferase subunit C (95 aa).

The protein belongs to the GatC family. In terms of assembly, heterotrimer of A, B and C subunits.

It catalyses the reaction L-glutamyl-tRNA(Gln) + L-glutamine + ATP + H2O = L-glutaminyl-tRNA(Gln) + L-glutamate + ADP + phosphate + H(+). The enzyme catalyses L-aspartyl-tRNA(Asn) + L-glutamine + ATP + H2O = L-asparaginyl-tRNA(Asn) + L-glutamate + ADP + phosphate + 2 H(+). In terms of biological role, allows the formation of correctly charged Asn-tRNA(Asn) or Gln-tRNA(Gln) through the transamidation of misacylated Asp-tRNA(Asn) or Glu-tRNA(Gln) in organisms which lack either or both of asparaginyl-tRNA or glutaminyl-tRNA synthetases. The reaction takes place in the presence of glutamine and ATP through an activated phospho-Asp-tRNA(Asn) or phospho-Glu-tRNA(Gln). This Campylobacter curvus (strain 525.92) protein is Aspartyl/glutamyl-tRNA(Asn/Gln) amidotransferase subunit C.